Consider the following 514-residue polypeptide: Bifunctional purine biosynthesis protein PurH (514 aa).

The 143-residue stretch at 1–143 (MTRRALISVS…KNHAGVLVLV (143 aa)) folds into the MGS-like domain.

The protein belongs to the PurH family.

It catalyses the reaction (6R)-10-formyltetrahydrofolate + 5-amino-1-(5-phospho-beta-D-ribosyl)imidazole-4-carboxamide = 5-formamido-1-(5-phospho-D-ribosyl)imidazole-4-carboxamide + (6S)-5,6,7,8-tetrahydrofolate. The enzyme catalyses IMP + H2O = 5-formamido-1-(5-phospho-D-ribosyl)imidazole-4-carboxamide. It functions in the pathway purine metabolism; IMP biosynthesis via de novo pathway; 5-formamido-1-(5-phospho-D-ribosyl)imidazole-4-carboxamide from 5-amino-1-(5-phospho-D-ribosyl)imidazole-4-carboxamide (10-formyl THF route): step 1/1. It participates in purine metabolism; IMP biosynthesis via de novo pathway; IMP from 5-formamido-1-(5-phospho-D-ribosyl)imidazole-4-carboxamide: step 1/1. The chain is Bifunctional purine biosynthesis protein PurH from Deinococcus geothermalis (strain DSM 11300 / CIP 105573 / AG-3a).